The following is a 224-amino-acid chain: Octanoyl-[acyl-carrier-protein]:protein N-octanoyltransferase LIPT2, mitochondrial (224 aa).

In terms of domain architecture, BPL/LPL catalytic spans 37–217; sequence SNIPNTLLLC…AFTEQFNCTL (181 aa). Residues 81 to 88, 147 to 149, and 160 to 162 each bind substrate; these read RGGLITFH, AIG, and GLA. The active-site Acyl-thioester intermediate is C178.

Belongs to the LipB family.

The protein localises to the mitochondrion. It carries out the reaction octanoyl-[ACP] + L-lysyl-[protein] = N(6)-octanoyl-L-lysyl-[protein] + holo-[ACP] + H(+). The protein operates within protein modification; protein lipoylation via endogenous pathway; protein N(6)-(lipoyl)lysine from octanoyl-[acyl-carrier-protein]: step 1/2. Catalyzes the transfer of endogenously produced octanoic acid from octanoyl-acyl-carrier-protein (octanoyl-ACP) onto the lipoyl domains of lipoate-dependent enzymes such as the protein H of the glycine cleavage system (GCSH). Lipoyl-ACP can also act as a substrate although octanoyl-ACP is likely to be the physiological substrate. This Danio rerio (Zebrafish) protein is Octanoyl-[acyl-carrier-protein]:protein N-octanoyltransferase LIPT2, mitochondrial (lipt2).